Reading from the N-terminus, the 246-residue chain is N-alpha-acetyltransferase 11 (246 aa).

Positions 1 to 58 (MNIRNARPEDLMNMQHCNLLCLPENYQMKYYFYHGLSWPQLSYIAEDEDGKIVGYVLA) are interaction with NAA15. The N-acetyltransferase domain maps to 1-152 (MNIRNARPED…DAYAMKRDLA (152 aa)). Residues 175-246 (EENQEAQDST…DSSEYLDSTS (72 aa)) form a disordered region. The segment covering 230–246 (SHSTDVQDSSEYLDSTS) has biased composition (polar residues).

It belongs to the acetyltransferase family. ARD1 subfamily. In terms of assembly, component of the N-terminal acetyltransferase A (NatA) complex composed of NAA11 and NAA15. Interacts with HIF1A.

It localises to the cytoplasm. The protein resides in the nucleus. The catalysed reaction is N-terminal glycyl-[protein] + acetyl-CoA = N-terminal N(alpha)-acetylglycyl-[protein] + CoA + H(+). The enzyme catalyses N-terminal L-alanyl-[protein] + acetyl-CoA = N-terminal N(alpha)-acetyl-L-alanyl-[protein] + CoA + H(+). It carries out the reaction N-terminal L-seryl-[protein] + acetyl-CoA = N-terminal N(alpha)-acetyl-L-seryl-[protein] + CoA + H(+). It catalyses the reaction N-terminal L-valyl-[protein] + acetyl-CoA = N-terminal N(alpha)-acetyl-L-valyl-[protein] + CoA + H(+). The catalysed reaction is N-terminal L-cysteinyl-[protein] + acetyl-CoA = N-terminal N(alpha)-acetyl-L-cysteinyl-[protein] + CoA + H(+). The enzyme catalyses N-terminal L-threonyl-[protein] + acetyl-CoA = N-terminal N(alpha)-acetyl-L-threonyl-[protein] + CoA + H(+). Displays alpha (N-terminal) acetyltransferase activity. Proposed alternative catalytic subunit of the N-terminal acetyltransferase A (NatA) complex. This chain is N-alpha-acetyltransferase 11 (Naa11), found in Rattus norvegicus (Rat).